The chain runs to 565 residues: E3 ubiquitin-protein ligase ipaH7.8 (565 aa).

The tract at residues 1-22 (MFSVNNTHSSVSCSPSINSNST) is disordered. The segment at 1-262 (MFSVNNTHSS…YHGPQIYFSM (262 aa)) is interaction with target proteins. Over residues 9–22 (SSVSCSPSINSNST) the composition is skewed to low complexity. 9 LRR repeats span residues 58–79 (QEAVLNLSDLNLTSLPELPKHI), 80–97 (SALIVENNKLTSLPKLPA), 98–119 (FLKELNADNNRLSVIPELPESL), 120–137 (TTLSVRSNQLENLPVLPN), 138–157 (HLTSLFVENNRLYNLPALPE), 158–179 (KLKFLHVYYNRLTTLPDLPDKL), 180–199 (EILCAQRNNLVTFPQFSDRN), 202–223 (RQKEYYFHFNQITTLPESFSQL), and 225–248 (SSYRINISGNPLSTRVLQSLQRLT). The segment at 263 to 270 (SDGQQNTL) is linker. The interval 271–565 (HRPLADAVTA…SENGSRLHHS (295 aa)) is E3 ubiquitin-protein ligase catalytic domain. The NEL domain maps to 273-565 (PLADAVTAWF…SENGSRLHHS (293 aa)). The active-site Glycyl thioester intermediate is cysteine 357.

The protein belongs to the LRR-containing bacterial E3 ligase family. In terms of processing, ubiquitinated in the presence of host E1 ubiquitin-activating enzyme, E2 ubiquitin-conjugating enzyme and ubiquitin.

Its subcellular location is the secreted. The protein resides in the host cytoplasm. It catalyses the reaction S-ubiquitinyl-[E2 ubiquitin-conjugating enzyme]-L-cysteine + [acceptor protein]-L-lysine = [E2 ubiquitin-conjugating enzyme]-L-cysteine + N(6)-ubiquitinyl-[acceptor protein]-L-lysine.. Its pathway is protein modification; protein ubiquitination. In terms of biological role, E3 ubiquitin ligase effector protein that interferes with host's innate immunity. Functions to alter host cell physiology and promote bacterial survival in host tissues. Catalyzes ubiquitination of human gasdermins GSDMB and GSDMD, promoting their degradation by the proteasome, thereby preventing cell death. In contrast, activates host cell pyroptosis in mouse cells: catalyzes ubiquitination of mouse Nlrp1b allele 1 protein, releasing the cleaved C-terminal part of Nlrp1b, which polymerizes and forms the Nlrp1b inflammasome followed by host cell pyroptosis. Does not catalyze ubiquitination of mouse GSDMD. The protein is E3 ubiquitin-protein ligase ipaH7.8 of Shigella flexneri.